The following is a 390-amino-acid chain: Neuromedin-B receptor (390 aa).

The Extracellular portion of the chain corresponds to 1 to 41 (MPPRSLSNLSFPTEANESELVPEVWEKDFLPDSDGTTAELV). N-linked (GlcNAc...) asparagine glycans are attached at residues N8 and N16. Residues 42-65 (IRCVIPSLYLIIISVGLLGNIMLV) form a helical membrane-spanning segment. The Cytoplasmic portion of the chain corresponds to 66-79 (KIFLTNSAMRNVPN). A helical transmembrane segment spans residues 80-99 (IFISNLAAGDLLLLLTCVPV). Over 100–117 (DASRYFFDEWVFGKLGCK) the chain is Extracellular. A disulfide bridge connects residues C116 and C198. Residues 118-139 (LIPAIQLTSVGVSVFTLTALSA) form a helical membrane-spanning segment. Over 140–156 (DRYRAIVNPMDMQTSGV) the chain is Cytoplasmic. The helical transmembrane segment at 157–177 (LLWTSLKAVGIWVVSVLLAVP) threads the bilayer. Topologically, residues 178 to 211 (EAVFSEVARIGSLDNSSFTACIPYPQTDELHPKI) are extracellular. The N-linked (GlcNAc...) asparagine glycan is linked to N192. Residues 212–235 (HSVLIFLVYFLIPLVIISIYYYHI) traverse the membrane as a helical segment. The Cytoplasmic segment spans residues 236-266 (AKTLIKSAHNLPGEYNEHTKKQMETRKRLAK). A helical transmembrane segment spans residues 267–287 (IVLVFVGCFVFCWFPNHVLYL). Residues 288-299 (YRSFNYKEIDPS) are Extracellular-facing. The chain crosses the membrane as a helical span at residues 300–327 (LGHMIVTLVARVLSFSNSCVNPFALYLL). At 328–390 (SESFRKHFNS…GHSTKQEIAL (63 aa)) the chain is on the cytoplasmic side. C341 carries the S-palmitoyl cysteine lipid modification. A Phosphoserine modification is found at S352.

This sequence belongs to the G-protein coupled receptor 1 family. In terms of tissue distribution, expressed in a subset of neurons of the pre-Botzinger complex. Within the pre-Botzinger complex, there is some overlap with neurons expressing Grpr with some cells expressing only Grpr or Nmbr while some cells express both. Expressed in dorsal root ganglion neurons and mast cells. Expressed in lung.

It localises to the cell membrane. Receptor for neuromedin-B. Contributes to the maintenance of basal sigh rate through signaling in the pre-Botzinger complex, a cluster of several thousand neurons in the ventrolateral medulla responsible for inspiration during respiratory activity. Contributes to the induction of sneezing following exposure to chemical irritants or allergens which causes release of NMB by nasal sensory neurons and activation of NMBR-expressing neurons in the sneeze-evoking region of the brainstem. These in turn activate neurons of the caudal ventral respiratory group, giving rise to the sneezing response. Contributes to induction of acute itch, possibly through its activation on dorsal root ganglion neurons by the NMB peptide. Plays a role in the innate immune response to influenza A virus infection by enhancing interferon alpha expression and reducing expression of IL6. Plays a role in CSF1-induced proliferation of osteoclast precursors by contributing to the positive regulation of the expression of the CSF1 receptor CSF1R. The polypeptide is Neuromedin-B receptor (Nmbr) (Mus musculus (Mouse)).